Here is a 498-residue protein sequence, read N- to C-terminus: Pyridine nucleotide-disulfide oxidoreductase domain-containing protein 1 (498 aa).

Met1 bears the N-acetylmethionine mark.

This sequence belongs to the class-I pyridine nucleotide-disulfide oxidoreductase family. PYROXD1 subfamily. Requires FAD as cofactor.

The protein localises to the nucleus. The protein resides in the cytoplasm. Its subcellular location is the myofibril. It localises to the sarcomere. In terms of biological role, probable FAD-dependent oxidoreductase; involved in the cellular oxidative stress response. Required for normal sarcomere structure and muscle fiber integrity. The protein is Pyridine nucleotide-disulfide oxidoreductase domain-containing protein 1 (Pyroxd1) of Rattus norvegicus (Rat).